Here is an 845-residue protein sequence, read N- to C-terminus: uncharacterized protein (845 aa).

Disordered stretches follow at residues 17 to 37 (RRKQ…NDQP) and 550 to 573 (AATE…NESL). Positions 622–707 (LSEQRFEREN…ELKKSNEHTR (86 aa)) form a coiled coil.

This is an uncharacterized protein from Saccharum officinarum (Sugarcane).